Reading from the N-terminus, the 394-residue chain is Chaperone protein DnaJ (394 aa).

The region spanning 6-71 (DYYEVLEVTK…DKRARYDQFG (66 aa)) is the J domain. Residues 152–234 (GVEKKFKLKK…CGGEGIEYGE (83 aa)) form a CR-type zinc finger. Zn(2+) is bound by residues Cys-165, Cys-168, Cys-182, Cys-185, Cys-208, Cys-211, Cys-222, and Cys-225. CXXCXGXG motif repeat units follow at residues 165 to 172 (CSHCHGTG), 182 to 189 (CPTCKGSG), 208 to 215 (CPTCNGEG), and 222 to 229 (CKVCGGEG).

It belongs to the DnaJ family. Homodimer. Zn(2+) is required as a cofactor.

It is found in the cytoplasm. Participates actively in the response to hyperosmotic and heat shock by preventing the aggregation of stress-denatured proteins and by disaggregating proteins, also in an autonomous, DnaK-independent fashion. Unfolded proteins bind initially to DnaJ; upon interaction with the DnaJ-bound protein, DnaK hydrolyzes its bound ATP, resulting in the formation of a stable complex. GrpE releases ADP from DnaK; ATP binding to DnaK triggers the release of the substrate protein, thus completing the reaction cycle. Several rounds of ATP-dependent interactions between DnaJ, DnaK and GrpE are required for fully efficient folding. Also involved, together with DnaK and GrpE, in the DNA replication of plasmids through activation of initiation proteins. The protein is Chaperone protein DnaJ of Bacteroides fragilis (strain YCH46).